Consider the following 782-residue polypeptide: Structure-specific endonuclease subunit SLX4 (782 aa).

Disordered regions lie at residues 63–91 and 359–425; these read TPKP…MSAM and KEHE…KKSK. Basic residues predominate over residues 73–84; it reads GLRKTGSRKSKK. The span at 374-388 shows a compositional bias: polar residues; it reads PAQSLTQSQVPSSID.

It belongs to the SLX4 family. Forms a heterodimer with SLX1. Post-translationally, phosphorylated in response to DNA damage.

The protein resides in the nucleus. Its function is as follows. Regulatory subunit of the SLX1-SLX4 structure-specific endonuclease that resolves DNA secondary structures generated during DNA repair and recombination. Has endonuclease activity towards branched DNA substrates, introducing single-strand cuts in duplex DNA close to junctions with ss-DNA. The chain is Structure-specific endonuclease subunit SLX4 from Scheffersomyces stipitis (strain ATCC 58785 / CBS 6054 / NBRC 10063 / NRRL Y-11545) (Yeast).